The primary structure comprises 347 residues: Probable E3 ubiquitin-protein ligase DTX3 (347 aa).

The segment at 113-157 is disordered; the sequence is EHPEMHRAGPPPLRAAPLLPPGARGLPPPPPPLPPPLPPRLREEA. A compositionally biased stretch (pro residues) spans 121–151; it reads GPPPLRAAPLLPPGARGLPPPPPPLPPPLPP. The segment at 164–205 adopts an RING-type zinc-finger fold; that stretch reads CPICLGEIQNAKTLEKCRHSFCEGCITRALQVKKACPMCGRF.

It belongs to the Deltex family. In terms of assembly, homodimer. May form a heterodimers with other members of the Deltex family. Interacts with NOTCH1.

Its subcellular location is the cytoplasm. The catalysed reaction is S-ubiquitinyl-[E2 ubiquitin-conjugating enzyme]-L-cysteine + [acceptor protein]-L-lysine = [E2 ubiquitin-conjugating enzyme]-L-cysteine + N(6)-ubiquitinyl-[acceptor protein]-L-lysine.. Its pathway is protein modification; protein ubiquitination. Functionally, regulator of Notch signaling, a signaling pathway involved in cell-cell communications that regulates a broad spectrum of cell-fate determinations. Probably acts both as a positive and negative regulator of Notch, depending on the developmental and cell context. Functions as an ubiquitin ligase protein in vitro, suggesting that it may regulate the Notch pathway via some ubiquitin ligase activity. The protein is Probable E3 ubiquitin-protein ligase DTX3 (DTX3) of Homo sapiens (Human).